Reading from the N-terminus, the 361-residue chain is MSVLTVHTSSKVYNVTVKSGVLSQIGSYIAPLRPSAILIVTDDQVADLYLDTVKSSLHNLAPLHAVVLPNGEETKSFDNYYALQTAALEYGLDRKSMIIALGGGVIGDLAGFVAATYMRGIAYVQVPTTLLAHDSSVGGKVAINHPLGKNMIGAFHQPEAVLYDPQVFATLPEREWRSGFAEVVKHGLIKDAAFYAWLQKYINDFSRIQGEIAEELLLRSIQVKANIVAADEKEKGERALLNLGHTLGHAIEAELGYGKITHGEAVVIGIIFAMKLSEKVYHQSLPIQDLEKWLKFLGYETRIPKGLDTGALIGTMKKDKKVERGVIRFVLLEEVGHAVIKEVDEQLIRELLNVEIEEETT.

Residues 104 to 108, 128 to 129, lysine 140, and lysine 149 contribute to the NAD(+) site; these read GVIGD and TT. Positions 182, 245, and 262 each coordinate Zn(2+).

This sequence belongs to the sugar phosphate cyclases superfamily. Dehydroquinate synthase family. NAD(+) serves as cofactor. Requires Co(2+) as cofactor. The cofactor is Zn(2+).

It is found in the cytoplasm. It carries out the reaction 7-phospho-2-dehydro-3-deoxy-D-arabino-heptonate = 3-dehydroquinate + phosphate. It participates in metabolic intermediate biosynthesis; chorismate biosynthesis; chorismate from D-erythrose 4-phosphate and phosphoenolpyruvate: step 2/7. Its function is as follows. Catalyzes the conversion of 3-deoxy-D-arabino-heptulosonate 7-phosphate (DAHP) to dehydroquinate (DHQ). The protein is 3-dehydroquinate synthase of Halalkalibacterium halodurans (strain ATCC BAA-125 / DSM 18197 / FERM 7344 / JCM 9153 / C-125) (Bacillus halodurans).